Consider the following 152-residue polypeptide: SsrA-binding protein (152 aa).

This sequence belongs to the SmpB family.

Its subcellular location is the cytoplasm. Its function is as follows. Required for rescue of stalled ribosomes mediated by trans-translation. Binds to transfer-messenger RNA (tmRNA), required for stable association of tmRNA with ribosomes. tmRNA and SmpB together mimic tRNA shape, replacing the anticodon stem-loop with SmpB. tmRNA is encoded by the ssrA gene; the 2 termini fold to resemble tRNA(Ala) and it encodes a 'tag peptide', a short internal open reading frame. During trans-translation Ala-aminoacylated tmRNA acts like a tRNA, entering the A-site of stalled ribosomes, displacing the stalled mRNA. The ribosome then switches to translate the ORF on the tmRNA; the nascent peptide is terminated with the 'tag peptide' encoded by the tmRNA and targeted for degradation. The ribosome is freed to recommence translation, which seems to be the essential function of trans-translation. The polypeptide is SsrA-binding protein (Rickettsia conorii (strain ATCC VR-613 / Malish 7)).